The following is a 200-amino-acid chain: GTP cyclohydrolase-2 (200 aa).

50–54 contacts GTP; that stretch reads RIHSE. Residues C55, C66, and C68 each coordinate Zn(2+). GTP-binding positions include Q71, 93–95, and T115; that span reads EGR. The active-site Proton acceptor is D127. The active-site Nucleophile is R129. Residues T150 and K155 each coordinate GTP.

This sequence belongs to the GTP cyclohydrolase II family. It depends on Zn(2+) as a cofactor.

The enzyme catalyses GTP + 4 H2O = 2,5-diamino-6-hydroxy-4-(5-phosphoribosylamino)-pyrimidine + formate + 2 phosphate + 3 H(+). It participates in cofactor biosynthesis; riboflavin biosynthesis; 5-amino-6-(D-ribitylamino)uracil from GTP: step 1/4. In terms of biological role, catalyzes the conversion of GTP to 2,5-diamino-6-ribosylamino-4(3H)-pyrimidinone 5'-phosphate (DARP), formate and pyrophosphate. The sequence is that of GTP cyclohydrolase-2 from Acinetobacter baylyi (strain ATCC 33305 / BD413 / ADP1).